The sequence spans 122 residues: Basic phospholipase A2 LmTX-I (122 aa).

Cystine bridges form between cysteine 26/cysteine 115, cysteine 28/cysteine 44, cysteine 43/cysteine 95, cysteine 49/cysteine 122, cysteine 50/cysteine 88, and cysteine 75/cysteine 86. Residues tyrosine 27, glycine 29, and glycine 31 each coordinate Ca(2+). Residue histidine 47 is part of the active site. Residue aspartate 48 coordinates Ca(2+). The active site involves aspartate 89.

Monomer. Ca(2+) is required as a cofactor. As to expression, expressed by the venom gland.

Its subcellular location is the secreted. The enzyme catalyses a 1,2-diacyl-sn-glycero-3-phosphocholine + H2O = a 1-acyl-sn-glycero-3-phosphocholine + a fatty acid + H(+). Its activity is regulated as follows. Inhibited by Mn(2+), Mg(2+), Zn(2+) and Cu(2+). Snake venom phospholipase A2 (PLA2) that displays neurotoxic and myotoxic activities. Induces inflammatory edema by mechanisms involving mast cell activation and arachidonic acid metabolites. Increases plasma creatine kinase activity. PLA2 catalyzes the calcium-dependent hydrolysis of the 2-acyl groups in 3-sn-phosphoglycerides. The protein is Basic phospholipase A2 LmTX-I of Lachesis muta muta (Bushmaster).